The sequence spans 378 residues: Non-functional pseudokinase ZRK6 (378 aa).

A Protein kinase domain is found at 34-378; it reads DGKCNPIKNF…SNNRSQMSSI (345 aa). ATP is bound by residues 40–48 and Lys-83; that span reads IKNFSYDQI.

This sequence belongs to the protein kinase superfamily. Ser/Thr protein kinase family. ZRK subfamily. As to quaternary structure, interacts with RPP13L4/ZAR1.

The protein is Non-functional pseudokinase ZRK6 of Arabidopsis thaliana (Mouse-ear cress).